The chain runs to 376 residues: Phosphate acyltransferase (376 aa).

Residues 334–376 are disordered; sequence AGSLEQAKRDAGGPGSASQMASPIAGPVSGQPAEPYSAQSSKA.

The protein belongs to the PlsX family. Homodimer. Probably interacts with PlsY.

The protein localises to the cytoplasm. The enzyme catalyses a fatty acyl-[ACP] + phosphate = an acyl phosphate + holo-[ACP]. Its pathway is lipid metabolism; phospholipid metabolism. Catalyzes the reversible formation of acyl-phosphate (acyl-PO(4)) from acyl-[acyl-carrier-protein] (acyl-ACP). This enzyme utilizes acyl-ACP as fatty acyl donor, but not acyl-CoA. The protein is Phosphate acyltransferase of Paraburkholderia phymatum (strain DSM 17167 / CIP 108236 / LMG 21445 / STM815) (Burkholderia phymatum).